Here is a 766-residue protein sequence, read N- to C-terminus: MKEKSKNAARTRREKENSEFYELAKLLPLPSAITSQLDKASIIRLTTSYLKMRVVFPEGLGEAWGHSSRTSPLDNVGRELGSHLLQTLDGFIFVVAPDGKIMYISETASVHLGLSQVELTGNSIYEYIHPADHDEMTAVLTAHQPYHSHFVQEYEIERSFFLRMKCVLAKRNAGLTCGGYKVIHCSGYLKIRQYSLDMSPFDGCYQNVGLVAVGHSLPPSAVTEIKLHSNMFMFRASLDMKLIFLDSRVAELTGYEPQDLIEKTLYHHVHGCDTFHLRCAHHLLLVKGQVTTKYYRFLAKHGGWVWVQSYATIVHNSRSSRPHCIVSVNYVLTDTEYKGLQLSLDQISASKPAFSYTSSSTPTMTDNRKGAKSRLSSSKSKSRTSPYPQYSGFHTERSESDHDSQWGGSPLTDTASPQLLDPADRPGSQHDASCAYRQFSDRSSLCYGFALDHSRLVEERHFHTQACEGGRCEAGRYFLGTPQAGREPWWGSRAALPLTKASPESREAYENSMPHIASVHRIHGRGHWDEDSVVSSPDPGSASESGDRYRTEQYQSSPHEPSKIETLIRATQQMIKEEENRLQLRKAPSDQLASINGAGKKHSLCFANYQQPPPTGEICHGSALANTSPCDHIQQREGKMLSPRENDYDNSPTALSRISSPNSDRISKSSLILAKDYLHSDISPHQTAGDHPTVSPNCFGSHRQYLDKHAYTLTGYALEHLYDSETIRNYSLGCNGSHFDVTSHLRMQPDPAQGHKGTSVIITNGS.

The 53-residue stretch at 1–53 folds into the bHLH domain; the sequence is MKEKSKNAARTRREKENSEFYELAKLLPLPSAITSQLDKASIIRLTTSYLKMR. 2 PAS domains span residues 77–147 and 218–288; these read GREL…QPYH and PPSA…LVKG. The PAC domain maps to 292 to 335; it reads TKYYRFLAKHGGWVWVQSYATIVHNSRSSRPHCIVSVNYVLTDT. In terms of domain architecture, Single-minded C-terminal spans 336–766; the sequence is EYKGLQLSLD…GTSVIITNGS (431 aa). Positions 353-365 are enriched in polar residues; sequence AFSYTSSSTPTMT. 3 disordered regions span residues 353 to 431, 528 to 563, and 642 to 662; these read AFSY…SQHD, WDED…EPSK, and SPRE…SSPN. Positions 368–387 match the Nuclear localization signal motif; that stretch reads RKGAKSRLSSSKSKSRTSPY. A compositionally biased stretch (low complexity) spans 373–385; that stretch reads SRLSSSKSKSRTS. Residues 394-404 are compositionally biased toward basic and acidic residues; it reads HTERSESDHDS. The span at 649 to 662 shows a compositional bias: polar residues; the sequence is DNSPTALSRISSPN.

As to quaternary structure, efficient DNA binding requires dimerization with another bHLH protein. Heterodimer; forms a heterodimer with ARNT, ARNT2.

The protein localises to the nucleus. Transcriptional factor that may have pleiotropic effects during embryogenesis and in the adult. The sequence is that of Single-minded homolog 1 (SIM1) from Pan troglodytes (Chimpanzee).